The following is an 86-amino-acid chain: Large ribosomal subunit protein bL27 (86 aa).

A disordered region spans residues Met-1–Ser-26.

It belongs to the bacterial ribosomal protein bL27 family.

The chain is Large ribosomal subunit protein bL27 from Rickettsia canadensis (strain McKiel).